The sequence spans 476 residues: Bifunctional protein HldE (476 aa).

The ribokinase stretch occupies residues 1 to 319 (MKVTLPAFEK…EALKSHQGES (319 aa)). 195 to 198 (NMSE) contributes to the ATP binding site. The active site involves D264. The tract at residues 345–476 (MTNGCFDILH…AIIQNIMSRH (132 aa)) is cytidylyltransferase.

In the N-terminal section; belongs to the carbohydrate kinase PfkB family. The protein in the C-terminal section; belongs to the cytidylyltransferase family. Homodimer.

It carries out the reaction D-glycero-beta-D-manno-heptose 7-phosphate + ATP = D-glycero-beta-D-manno-heptose 1,7-bisphosphate + ADP + H(+). The enzyme catalyses D-glycero-beta-D-manno-heptose 1-phosphate + ATP + H(+) = ADP-D-glycero-beta-D-manno-heptose + diphosphate. Its pathway is nucleotide-sugar biosynthesis; ADP-L-glycero-beta-D-manno-heptose biosynthesis; ADP-L-glycero-beta-D-manno-heptose from D-glycero-beta-D-manno-heptose 7-phosphate: step 1/4. The protein operates within nucleotide-sugar biosynthesis; ADP-L-glycero-beta-D-manno-heptose biosynthesis; ADP-L-glycero-beta-D-manno-heptose from D-glycero-beta-D-manno-heptose 7-phosphate: step 3/4. In terms of biological role, catalyzes the phosphorylation of D-glycero-D-manno-heptose 7-phosphate at the C-1 position to selectively form D-glycero-beta-D-manno-heptose-1,7-bisphosphate. Functionally, catalyzes the ADP transfer from ATP to D-glycero-beta-D-manno-heptose 1-phosphate, yielding ADP-D-glycero-beta-D-manno-heptose. The polypeptide is Bifunctional protein HldE (Shewanella amazonensis (strain ATCC BAA-1098 / SB2B)).